Here is a 139-residue protein sequence, read N- to C-terminus: D-ribose pyranase (139 aa).

His-20 functions as the Proton donor in the catalytic mechanism. Substrate-binding positions include Asp-28, His-106, and Tyr-128 to Asn-130.

This sequence belongs to the RbsD / FucU family. RbsD subfamily. In terms of assembly, homodecamer.

The protein resides in the cytoplasm. The enzyme catalyses beta-D-ribopyranose = beta-D-ribofuranose. It functions in the pathway carbohydrate metabolism; D-ribose degradation; D-ribose 5-phosphate from beta-D-ribopyranose: step 1/2. Functionally, catalyzes the interconversion of beta-pyran and beta-furan forms of D-ribose. This is D-ribose pyranase from Escherichia coli (strain 55989 / EAEC).